A 167-amino-acid polypeptide reads, in one-letter code: Sperm acrosome membrane-associated protein 3 (167 aa).

The Cytoplasmic portion of the chain corresponds to 1–63 (MVSALREAPL…EARSRALRRR (63 aa)). Residues 64-84 (WCPAGIILLALISLLSCLLPA) traverse the membrane as a helical; Signal-anchor for type II membrane protein segment. Topologically, residues 85-167 (SEAKVYGRCE…VPNVCQMYCS (83 aa)) are extracellular. The 80-residue stretch at 88-167 (KVYGRCELAR…VPNVCQMYCS (80 aa)) folds into the C-type lysozyme domain. The cysteines at positions 151 and 166 are disulfide-linked.

It belongs to the glycosyl hydrolase 22 family. In terms of assembly, interacts with ASTL. Post-translationally, the processed form derives from the membrane form by proteolytic processing.

It localises to the cytoplasmic vesicle. It is found in the secretory vesicle. The protein resides in the acrosome membrane. Functionally, sperm surface membrane protein that may be involved in sperm-egg plasma membrane adhesion and fusion during fertilization. It could be a potential receptor for the egg oligosaccharide residue N-acetylglucosamine, which is present in the extracellular matrix over the egg plasma membrane. The processed form has no detectable bacteriolytic activity in vitro. This chain is Sperm acrosome membrane-associated protein 3 (SPACA3), found in Pongo pygmaeus (Bornean orangutan).